The primary structure comprises 94 residues: Phormicin (94 aa).

The signal sequence occupies residues 1–23; it reads MKFFMVFVVTFCLAVCFVSQSLA. Positions 24–54 are excised as a propeptide; sequence IPADAANDAHFVDGVQALKEIEPELHGRYKR. Intrachain disulfides connect cysteine 57/cysteine 84, cysteine 70/cysteine 90, and cysteine 74/cysteine 92.

The protein belongs to the invertebrate defensin family. Type 1 subfamily.

It is found in the secreted. Functionally, responsible for the anti Gram-positive activity of immune hemolymph of P.terraenovae. This is Phormicin from Protophormia terraenovae (Northern blowfly).